Reading from the N-terminus, the 101-residue chain is Urease subunit beta (101 aa).

This sequence belongs to the urease beta subunit family. Heterotrimer of UreA (gamma), UreB (beta) and UreC (alpha) subunits. Three heterotrimers associate to form the active enzyme.

It localises to the cytoplasm. It catalyses the reaction urea + 2 H2O + H(+) = hydrogencarbonate + 2 NH4(+). It participates in nitrogen metabolism; urea degradation; CO(2) and NH(3) from urea (urease route): step 1/1. The protein is Urease subunit beta of Bradyrhizobium diazoefficiens (strain JCM 10833 / BCRC 13528 / IAM 13628 / NBRC 14792 / USDA 110).